The primary structure comprises 327 residues: Beta-1,4-galactosyltransferase 7 (327 aa).

Residues 1–30 are Cytoplasmic-facing; that stretch reads MFPSRRKAAQLPWEDGRSGLLSGGLPRKCS. The helical; Signal-anchor for type II membrane protein transmembrane segment at 31–51 threads the bilayer; sequence VFHLFVACLSLGFFSLLWLQL. Residues 52–327 lie on the Lumenal side of the membrane; sequence SCSGDVARAV…KTATPWCTFS (276 aa). The interval 63-87 is disordered; that stretch reads GQGQETSGPPRACPPEPPPEHWEED. UDP-alpha-D-galactose-binding positions include 100–104 and 139–141; these read PFRER and FNR. Asparagine 154 carries an N-linked (GlcNAc...) asparagine glycan. Residues 164-165, tyrosine 194, and tryptophan 224 contribute to the UDP-alpha-D-galactose site; that span reads VD. Aspartate 165 lines the Mn(2+) pocket. Residue 226-229 coordinates N-acetyl-D-glucosamine; sequence REDD. Residue histidine 257 participates in Mn(2+) binding. UDP-alpha-D-galactose is bound by residues 257–259 and arginine 266; that span reads HLH. Cysteines 316 and 324 form a disulfide.

This sequence belongs to the glycosyltransferase 7 family. Requires Mn(2+) as cofactor. In terms of tissue distribution, high expression in heart, pancreas and liver, medium in placenta and kidney, low in brain, skeletal muscle and lung.

It is found in the golgi apparatus. The protein localises to the golgi stack membrane. The catalysed reaction is 3-O-(beta-D-xylosyl)-L-seryl-[protein] + UDP-alpha-D-galactose = 3-O-(beta-D-galactosyl-(1-&gt;4)-beta-D-xylosyl)-L-seryl-[protein] + UDP + H(+). It participates in protein modification; protein glycosylation. In terms of biological role, required for the biosynthesis of the tetrasaccharide linkage region of proteoglycans, especially for small proteoglycans in skin fibroblasts. This Homo sapiens (Human) protein is Beta-1,4-galactosyltransferase 7 (B4GALT7).